We begin with the raw amino-acid sequence, 238 residues long: Ribonuclease PH (238 aa).

Phosphate contacts are provided by residues Arg-86 and 124 to 126; that span reads GTR.

It belongs to the RNase PH family. As to quaternary structure, homohexameric ring arranged as a trimer of dimers.

It catalyses the reaction tRNA(n+1) + phosphate = tRNA(n) + a ribonucleoside 5'-diphosphate. Its function is as follows. Phosphorolytic 3'-5' exoribonuclease that plays an important role in tRNA 3'-end maturation. Removes nucleotide residues following the 3'-CCA terminus of tRNAs; can also add nucleotides to the ends of RNA molecules by using nucleoside diphosphates as substrates, but this may not be physiologically important. Probably plays a role in initiation of 16S rRNA degradation (leading to ribosome degradation) during starvation. In Salmonella gallinarum (strain 287/91 / NCTC 13346), this protein is Ribonuclease PH.